A 1429-amino-acid polypeptide reads, in one-letter code: Probable ATP-dependent RNA helicase spindle-E (1429 aa).

Residues 121–288 (VNAINTHQVV…FSTKVSVPPV (168 aa)) enclose the Helicase ATP-binding domain. 134–141 (GETGCGKT) provides a ligand contact to ATP. The DEAH box motif lies at 234–237 (DEVH). In terms of domain architecture, Helicase C-terminal spans 349 to 521 (QSEQSYDDAK…NSVLKAKLLD (173 aa)). One can recognise a Tudor domain in the interval 933–996 (AGVLTKGMMV…RLMTKELLSQ (64 aa)).

This sequence belongs to the DEAD box helicase family. DEAH subfamily.

Its subcellular location is the cytoplasm. It carries out the reaction ATP + H2O = ADP + phosphate + H(+). Functionally, probable ATP-binding RNA helicase which plays a central role during spermatogenesis and oogenesis by repressing transposable elements and preventing their mobilization, which is essential for the germline integrity. Acts via the piRNA metabolic process, which mediates the repression of transposable elements during meiosis by forming complexes composed of piRNAs and Piwi and govern the methylation and subsequent repression of transposons. Involved in the repression of LTR retrotransposon copia. Also involved in telomere regulation by repressing specialized telomeric retroelements HeT-A, TAHRE, and TART; Drosophila telomeres being maintained by transposition of specialized telomeric retroelements. Involved in telomeric trans-silencing, a repression mechanism by which a transposon or a transgene inserted in subtelomeric heterochromatin has the capacity to repress in trans in the female germline, a homologous transposon, or transgene located in euchromatin. Involved in the repression of testis-expressed Stellate genes by the homologous Su(Ste) repeats. Required for anteroposterior and dorsoventral axis formation during oogenesis. This Drosophila ananassae (Fruit fly) protein is Probable ATP-dependent RNA helicase spindle-E (spn-E).